Here is a 468-residue protein sequence, read N- to C-terminus: 3-isopropylmalate dehydratase large subunit (468 aa).

Residues C349, C409, and C412 each contribute to the [4Fe-4S] cluster site.

It belongs to the aconitase/IPM isomerase family. LeuC type 1 subfamily. Heterodimer of LeuC and LeuD. The cofactor is [4Fe-4S] cluster.

It catalyses the reaction (2R,3S)-3-isopropylmalate = (2S)-2-isopropylmalate. The protein operates within amino-acid biosynthesis; L-leucine biosynthesis; L-leucine from 3-methyl-2-oxobutanoate: step 2/4. In terms of biological role, catalyzes the isomerization between 2-isopropylmalate and 3-isopropylmalate, via the formation of 2-isopropylmaleate. The sequence is that of 3-isopropylmalate dehydratase large subunit from Nitrobacter hamburgensis (strain DSM 10229 / NCIMB 13809 / X14).